A 161-amino-acid polypeptide reads, in one-letter code: 2-C-methyl-D-erythritol 2,4-cyclodiphosphate synthase (161 aa).

Residues Asp-10 and His-12 each coordinate a divalent metal cation. Residues 10 to 12 and 36 to 37 contribute to the 4-CDP-2-C-methyl-D-erythritol 2-phosphate site; these read DVH and HS. His-44 contacts a divalent metal cation. Residues 58 to 60, 63 to 67, 134 to 137, Phe-141, and Arg-144 contribute to the 4-CDP-2-C-methyl-D-erythritol 2-phosphate site; these read DIG, FPDTD, and TTTE.

Belongs to the IspF family. As to quaternary structure, homotrimer. A divalent metal cation serves as cofactor.

It catalyses the reaction 4-CDP-2-C-methyl-D-erythritol 2-phosphate = 2-C-methyl-D-erythritol 2,4-cyclic diphosphate + CMP. It participates in isoprenoid biosynthesis; isopentenyl diphosphate biosynthesis via DXP pathway; isopentenyl diphosphate from 1-deoxy-D-xylulose 5-phosphate: step 4/6. In terms of biological role, involved in the biosynthesis of isopentenyl diphosphate (IPP) and dimethylallyl diphosphate (DMAPP), two major building blocks of isoprenoid compounds. Catalyzes the conversion of 4-diphosphocytidyl-2-C-methyl-D-erythritol 2-phosphate (CDP-ME2P) to 2-C-methyl-D-erythritol 2,4-cyclodiphosphate (ME-CPP) with a corresponding release of cytidine 5-monophosphate (CMP). The polypeptide is 2-C-methyl-D-erythritol 2,4-cyclodiphosphate synthase (Shewanella putrefaciens (strain CN-32 / ATCC BAA-453)).